The following is a 123-amino-acid chain: Zinc metalloproteinase-disintegrin-like jerdohagin (123 aa).

The 47-residue stretch at 6–52 (RYLYIRHDREACTCHANSCIMSAYFSNSHVQYENYINDCKPQCILNE) folds into the Peptidase M12B domain. His12 contacts Zn(2+). A disulfide bond links Cys19 and Cys24. Ca(2+)-binding residues include Cys48 and Asn51. Residues 53 to 80 (LHSWVECESGECCEQCRSECDIAESCTN) enclose the Disintegrin domain. Intrachain disulfides connect Cys59/Cys65, Cys64/Cys78, Cys72/Cys90, and Cys106/Cys116. The short motif at 71–73 (ECD) is the D/ECD-tripeptide element.

It belongs to the venom metalloproteinase (M12B) family. P-III subfamily. P-IIIa sub-subfamily. Monomer. Zn(2+) is required as a cofactor. The N-terminus is blocked. As to expression, expressed by the venom gland.

The protein localises to the secreted. With respect to regulation, its proteolytic and hemorrhagic activities are inhibited by EDTA, but not by PMSF. Snake venom metalloproteinase that has high hemorrhagic activity and degrades the alpha-chain of fibrinogen (FGA), leaving the beta- and the gamma-chain intact. It may also inhibit platelet aggregation. Cleaves insulin B chain at '25-Phe-|-Val-26', '26-Val-|-Asn-27', '29-His-|-Leu-30', '30-Leu-|-Cys-31', '33-Ser-|-His-34', '35-Leu-|-Val-36', '40-Tyr-|-Leu-41', '41-Leu-|-Val-42', '42-Val-|-Cys-43', '43-Cys-|-Gly-44', '44-Gly-|-Glu-45', '46-Arg-|-Gly-47', '47-Gly-|-Phe-48', '49-Phe-|-Tyr-50' and '52-Pro-|-Lys-53' bonds. Also cleaves human prothrombin (72 kDa) and activation fragment F1 (27 kDa) of activated human prothrombin, to generate two new proteins of 68 and 23 kDa. This chain is Zinc metalloproteinase-disintegrin-like jerdohagin, found in Protobothrops jerdonii (Jerdon's pitviper).